A 206-amino-acid polypeptide reads, in one-letter code: dITP/XTP pyrophosphatase (206 aa).

S7 to K12 is a substrate binding site. D70 serves as the catalytic Proton acceptor. D70 lines the Mg(2+) pocket. Substrate is bound by residues T71, F154 to D157, K177, and H182 to R183.

The protein belongs to the HAM1 NTPase family. In terms of assembly, homodimer. Mg(2+) is required as a cofactor.

The enzyme catalyses XTP + H2O = XMP + diphosphate + H(+). It catalyses the reaction dITP + H2O = dIMP + diphosphate + H(+). It carries out the reaction ITP + H2O = IMP + diphosphate + H(+). Functionally, pyrophosphatase that catalyzes the hydrolysis of nucleoside triphosphates to their monophosphate derivatives, with a high preference for the non-canonical purine nucleotides XTP (xanthosine triphosphate), dITP (deoxyinosine triphosphate) and ITP. Seems to function as a house-cleaning enzyme that removes non-canonical purine nucleotides from the nucleotide pool, thus preventing their incorporation into DNA/RNA and avoiding chromosomal lesions. This chain is dITP/XTP pyrophosphatase, found in Chlamydia abortus (strain DSM 27085 / S26/3) (Chlamydophila abortus).